The chain runs to 204 residues: Recombination protein RecR (204 aa).

A C4-type zinc finger spans residues 61 to 76; sequence CACCNTFSETQVCSTC. The Toprim domain occupies 84–183; it reads SLLCIVETPA…KVTRIARGIP (100 aa).

It belongs to the RecR family.

Its function is as follows. May play a role in DNA repair. It seems to be involved in an RecBC-independent recombinational process of DNA repair. It may act with RecF and RecO. The protein is Recombination protein RecR of Polynucleobacter necessarius subsp. necessarius (strain STIR1).